The primary structure comprises 247 residues: Caffeoyl-CoA O-methyltransferase (247 aa).

Lysine 21 serves as a coordination point for substrate. Residues threonine 63, glutamate 85, 87–88 (GV), serine 93, aspartate 111, and alanine 140 contribute to the S-adenosyl-L-methionine site. Position 163 (aspartate 163) interacts with substrate. An a divalent metal cation-binding site is contributed by aspartate 163. Residue aspartate 165 participates in S-adenosyl-L-methionine binding. Residues aspartate 189 and asparagine 190 each coordinate a divalent metal cation. A substrate-binding site is contributed by asparagine 194.

Belongs to the class I-like SAM-binding methyltransferase superfamily. Cation-dependent O-methyltransferase family. CCoAMT subfamily. Requires a divalent metal cation as cofactor.

It carries out the reaction (E)-caffeoyl-CoA + S-adenosyl-L-methionine = (E)-feruloyl-CoA + S-adenosyl-L-homocysteine + H(+). The protein operates within aromatic compound metabolism; phenylpropanoid biosynthesis. In terms of biological role, methylates caffeoyl-CoA to feruloyl-CoA and 5-hydroxyferuloyl-CoA to sinapoyl-CoA. Plays a role in the synthesis of feruloylated polysaccharides. Involved in the reinforcement of the plant cell wall. Also involved in the responding to wounding or pathogen challenge by the increased formation of cell wall-bound ferulic acid polymers. This Populus tremuloides (Quaking aspen) protein is Caffeoyl-CoA O-methyltransferase.